We begin with the raw amino-acid sequence, 568 residues long: DNA ligase (568 aa).

Glu249 serves as a coordination point for ATP. Catalysis depends on Lys251, which acts as the N6-AMP-lysine intermediate. 6 residues coordinate ATP: Arg256, Arg271, Glu301, Phe342, Arg418, and Lys424.

The protein belongs to the ATP-dependent DNA ligase family. Mg(2+) is required as a cofactor.

It carries out the reaction ATP + (deoxyribonucleotide)n-3'-hydroxyl + 5'-phospho-(deoxyribonucleotide)m = (deoxyribonucleotide)n+m + AMP + diphosphate.. In terms of biological role, DNA ligase that seals nicks in double-stranded DNA during DNA replication, DNA recombination and DNA repair. This Methanocella arvoryzae (strain DSM 22066 / NBRC 105507 / MRE50) protein is DNA ligase.